The sequence spans 72 residues: MAKEDNIEMQGTVLDTLPNTMFRVELENGHVVTAHISGKMRKNYIRILTGDKVTVELTPYDLSKGRIVFRSR.

The S1-like domain occupies 1-72; that stretch reads MAKEDNIEMQ…SKGRIVFRSR (72 aa).

Belongs to the IF-1 family. In terms of assembly, component of the 30S ribosomal translation pre-initiation complex which assembles on the 30S ribosome in the order IF-2 and IF-3, IF-1 and N-formylmethionyl-tRNA(fMet); mRNA recruitment can occur at any time during PIC assembly.

The protein resides in the cytoplasm. Functionally, one of the essential components for the initiation of protein synthesis. Stabilizes the binding of IF-2 and IF-3 on the 30S subunit to which N-formylmethionyl-tRNA(fMet) subsequently binds. Helps modulate mRNA selection, yielding the 30S pre-initiation complex (PIC). Upon addition of the 50S ribosomal subunit IF-1, IF-2 and IF-3 are released leaving the mature 70S translation initiation complex. The protein is Translation initiation factor IF-1 of Sodalis glossinidius (strain morsitans).